The sequence spans 158 residues: NAD(P)H-quinone oxidoreductase subunit J, chloroplastic (158 aa).

The protein belongs to the complex I 30 kDa subunit family. NDH is composed of at least 16 different subunits, 5 of which are encoded in the nucleus.

The protein resides in the plastid. It is found in the chloroplast thylakoid membrane. It carries out the reaction a plastoquinone + NADH + (n+1) H(+)(in) = a plastoquinol + NAD(+) + n H(+)(out). The enzyme catalyses a plastoquinone + NADPH + (n+1) H(+)(in) = a plastoquinol + NADP(+) + n H(+)(out). NDH shuttles electrons from NAD(P)H:plastoquinone, via FMN and iron-sulfur (Fe-S) centers, to quinones in the photosynthetic chain and possibly in a chloroplast respiratory chain. The immediate electron acceptor for the enzyme in this species is believed to be plastoquinone. Couples the redox reaction to proton translocation, and thus conserves the redox energy in a proton gradient. The polypeptide is NAD(P)H-quinone oxidoreductase subunit J, chloroplastic (Cicer arietinum (Chickpea)).